A 73-amino-acid polypeptide reads, in one-letter code: UPF0346 protein SH1485 (73 aa).

This sequence belongs to the UPF0346 family.

The polypeptide is UPF0346 protein SH1485 (Staphylococcus haemolyticus (strain JCSC1435)).